A 208-amino-acid chain; its full sequence is Transcription factor atf-4 homolog (208 aa).

2 disordered regions span residues 18–47 (HNQT…YFNP) and 106–165 (ERRS…EKEE). The span at 110–120 (NSSASPASNWS) shows a compositional bias: low complexity. Residues 121–141 (SDEHDSQSEKSYHPYKTPEKK) show a composition bias toward basic and acidic residues. The bZIP domain occupies 138-201 (PEKKERKKAQ…RYFKKFMTEM (64 aa)). Residues 140 to 163 (KKERKKAQNRLAATRYREKKRREK) are basic motif. The tract at residues 173–187 (LSVTNGKLKDQVSEL) is leucine-zipper.

This sequence belongs to the bZIP family.

The protein localises to the nucleus. Functionally, transcription factor. Involved in positively modulating longevity and stress tolerance, probably acting by positively regulating expression of transsulfuration enzyme cth-2, leading to increased hydrogen sulfide production and therefore increased protein persulfidation, a protective modification of redox-reactive cysteines. May mediate longevity and increased stress resistance induced by mTORC1 suppression. The sequence is that of Transcription factor atf-4 homolog from Caenorhabditis elegans.